Consider the following 123-residue polypeptide: Large ribosomal subunit protein uL14 (123 aa).

The protein belongs to the universal ribosomal protein uL14 family. In terms of assembly, part of the 50S ribosomal subunit. Forms a cluster with proteins L3 and L19. In the 70S ribosome, L14 and L19 interact and together make contacts with the 16S rRNA in bridges B5 and B8.

Binds to 23S rRNA. Forms part of two intersubunit bridges in the 70S ribosome. This chain is Large ribosomal subunit protein uL14, found in Serratia proteamaculans (strain 568).